A 331-amino-acid chain; its full sequence is Glucokinase (331 aa).

Residue G13–T18 coordinates ATP.

This sequence belongs to the bacterial glucokinase family.

The protein localises to the cytoplasm. The enzyme catalyses D-glucose + ATP = D-glucose 6-phosphate + ADP + H(+). This chain is Glucokinase, found in Caulobacter vibrioides (strain ATCC 19089 / CIP 103742 / CB 15) (Caulobacter crescentus).